Here is a 180-residue protein sequence, read N- to C-terminus: Vacuolar transporter chaperone complex subunit 1 (180 aa).

Residues 1–70 (MASVIEKGLA…PKTFFANERT (70 aa)) lie on the Cytoplasmic side of the membrane. The chain crosses the membrane as a helical span at residues 71–91 (FLKWMSISVMIGMMSLTLLNF). The Vacuolar segment spans residues 92–100 (GDTSSNASE). The helical transmembrane segment at 101-121 (LAGLVLLPVSILFMIHSLFVF) threads the bilayer. Residues 122 to 140 (KDRANKIYMREPMRYDDTK) are Cytoplasmic-facing. The chain crosses the membrane as a helical span at residues 141 to 161 (GPTILVLVLGVSLGIAAIFSV). At 162–180 (QKQYYRTASSSFNDGPRFS) the chain is on the vacuolar side.

The protein belongs to the VTC1 family. The VTC core complex is an integral membrane heterooligomer composed of at least the catalytic subunit vtc4 and the accessory subunits vtc1 and vtc2. vtc1 is a small membrane protein without hydrophilic domain. Vtc2 and vtc4 are related and have 2 hydrophilic domains that face the cytosol, an N-terminal SPX domain and the central core domain. The central core in vtc4 is the catalytic domain.

Its subcellular location is the acidocalcisome membrane. Its function is as follows. Accessory subunit of the vacuolar transporter chaperone (VTC) complex. The VTC complex acts as a vacuolar polyphosphate polymerase that catalyzes the synthesis of inorganic polyphosphate (polyP) via transfer of phosphate from ATP to a growing polyP chain, releasing ADP. VTC exposes its catalytic domain vtc4 to the cytosol, where the growing polyP chain winds through a tunnel-shaped pocket, integrating cytoplasmic polymer synthesis with polyP membrane translocation. The VTC complex carries 9 vacuolar transmembrane domains, which are likely to constitute the translocation channel into the organelle lumen. PolyP synthesis is tightly coupled to its transport into the vacuole lumen, in order to avoid otherwise toxic intermediates in the cytosol, and it depends on the proton gradient across the membrane, formed by V-ATPase. VTC1 contributes only 3 transmembrane domains to the complex. The VTC complex also plays a role in vacuolar membrane fusion. The sequence is that of Vacuolar transporter chaperone complex subunit 1 (VTC1) from Trypanosoma brucei brucei (strain 927/4 GUTat10.1).